The primary structure comprises 819 residues: Zinc finger protein 27 (819 aa).

The 75-residue stretch at 1 to 75 folds into the KRAB domain; sequence MDVTIDFSRE…KTLGAESCHD (75 aa). A disordered region spans residues 93–123; that stretch reads PKRPRHWDPPEDEPKHSSDLQTHDESNGLKR. The segment covering 98–120 has biased composition (basic and acidic residues); that stretch reads HWDPPEDEPKHSSDLQTHDESNG. C2H2-type zinc fingers lie at residues 205–227, 233–255, 261–283, 289–311, 317–339, 345–367, 401–423, 429–451, 457–479, 485–507, 513–535, 541–563, 569–591, 597–619, 625–647, 653–675, 681–703, 709–731, 737–759, 765–787, and 793–815; these read YVCV…QKTH, YKCG…RRIH, YDCS…QKIH, HGCV…QKIH, YVCI…RRIH, YACD…QRIH, SICA…QRTH, YQCG…RRIH, YVCV…QVIH, YQCG…KRIH, YVCS…QKTH, YVCA…QRIH, YGCS…EKIH, YGCR…QKIH, HVCA…QRIH, YGCT…RPIH, YVCA…QKTH, YACS…HRIH, YDCG…QRIH, YRCA…QTTH, and YKCV…ENVH.

Belongs to the krueppel C2H2-type zinc-finger protein family.

Its subcellular location is the nucleus. Functionally, may be involved in transcriptional regulation. This chain is Zinc finger protein 27 (Zfp27), found in Mus musculus (Mouse).